Consider the following 602-residue polypeptide: Glutamine--fructose-6-phosphate aminotransferase [isomerizing] (602 aa).

The active-site Nucleophile; for GATase activity is the Cys-2. The 216-residue stretch at 2–217 folds into the Glutamine amidotransferase type-2 domain; it reads CGIVGVVGNT…DQELVIVKAD (216 aa). Residues 67–87 are disordered; the sequence is IGHTRWATHGKPTEDNAHPHR. Positions 77–87 are enriched in basic and acidic residues; it reads KPTEDNAHPHR. SIS domains lie at 283-422 and 455-592; these read IIKA…ANGN and VREL…VDKP. Lys-597 functions as the For Fru-6P isomerization activity in the catalytic mechanism.

Homodimer.

It is found in the cytoplasm. It catalyses the reaction D-fructose 6-phosphate + L-glutamine = D-glucosamine 6-phosphate + L-glutamate. In terms of biological role, catalyzes the first step in hexosamine metabolism, converting fructose-6P into glucosamine-6P using glutamine as a nitrogen source. This chain is Glutamine--fructose-6-phosphate aminotransferase [isomerizing], found in Streptococcus pneumoniae (strain ATCC BAA-255 / R6).